The following is a 253-amino-acid chain: DNA repair protein RecO (253 aa).

The protein belongs to the RecO family.

Involved in DNA repair and RecF pathway recombination. The protein is DNA repair protein RecO of Staphylococcus epidermidis (strain ATCC 35984 / DSM 28319 / BCRC 17069 / CCUG 31568 / BM 3577 / RP62A).